Here is a 194-residue protein sequence, read N- to C-terminus: Putative NAD(P)H nitroreductase YfhC (194 aa).

FMN-binding positions include Arg-20–Ser-22, Lys-147–Ile-148, and Arg-188.

The protein belongs to the nitroreductase family. FMN serves as cofactor.

The sequence is that of Putative NAD(P)H nitroreductase YfhC (yfhC) from Bacillus subtilis (strain 168).